Reading from the N-terminus, the 576-residue chain is Ecdysone receptor (576 aa).

The modulating stretch occupies residues 1–162 (MSLGARGYRR…GPAPRQQEEL (162 aa)). The tract at residues 87–154 (CTMEQQQPQP…GEARRQKKGP (68 aa)) is disordered. The span at 91-106 (QQQPQPQQQPQQTQPL) shows a compositional bias: low complexity. Pro residues predominate over residues 107–117 (PSMPLPMPPTT). 2 consecutive NR C4-type zinc fingers follow at residues 163–183 (CLVCGDRASGYHYNALTCEGC) and 199–223 (CKFGHACEMDIYMRRKCQECRLKKC). A DNA-binding region (nuclear receptor) is located at residues 163-235 (CLVCGDRASG…VGMRPECVVP (73 aa)). Positions 245–269 (EKKAQREKDKLPVSTTTVDDHMPPI) are disordered. An NR LBD domain is found at 314–548 (NQKSLIARLV…FLEEIWDVAD (235 aa)).

The protein belongs to the nuclear hormone receptor family. NR1 subfamily.

The protein localises to the nucleus. In terms of biological role, receptor for ecdysone. Binds to ecdysone response elements (ECRES). The polypeptide is Ecdysone receptor (EcR) (Heliothis virescens (Tobacco budworm moth)).